The following is a 572-amino-acid chain: Adenine deaminase (572 aa).

The protein belongs to the metallo-dependent hydrolases superfamily. Adenine deaminase family. Mn(2+) is required as a cofactor.

It carries out the reaction adenine + H2O + H(+) = hypoxanthine + NH4(+). The sequence is that of Adenine deaminase from Clostridium perfringens (strain 13 / Type A).